A 645-amino-acid chain; its full sequence is Nucleolar GTP-binding protein 1 (645 aa).

Residues 168 to 340 (RTLLICGYPN…VRNKACEKLL (173 aa)) enclose the OBG-type G domain. Residues 174–181 (GYPNVGKS), 220–224 (DTPGI), and 288–291 (NKTD) each bind GTP. A disordered region spans residues 567–645 (GQNDSMASGS…KRGIGKSDFR (79 aa)). Residues 612 to 624 (NRDARQGEADRHA) are compositionally biased toward basic and acidic residues.

The protein belongs to the TRAFAC class OBG-HflX-like GTPase superfamily. OBG GTPase family. NOG subfamily.

Its subcellular location is the nucleus. It localises to the nucleolus. Functionally, involved in the biogenesis of the 60S ribosomal subunit. The protein is Nucleolar GTP-binding protein 1 (NOG1) of Candida glabrata (strain ATCC 2001 / BCRC 20586 / JCM 3761 / NBRC 0622 / NRRL Y-65 / CBS 138) (Yeast).